The following is a 173-amino-acid chain: Translation initiation factor IF-3 (173 aa).

The protein belongs to the IF-3 family. In terms of assembly, monomer.

Its subcellular location is the cytoplasm. In terms of biological role, IF-3 binds to the 30S ribosomal subunit and shifts the equilibrium between 70S ribosomes and their 50S and 30S subunits in favor of the free subunits, thus enhancing the availability of 30S subunits on which protein synthesis initiation begins. In Neisseria gonorrhoeae (strain ATCC 700825 / FA 1090), this protein is Translation initiation factor IF-3.